The chain runs to 308 residues: Testis-specific Y-encoded protein 8 (308 aa).

It belongs to the nucleosome assembly protein (NAP) family.

The protein resides in the cytoplasm. The protein localises to the nucleus. Its function is as follows. May be involved in sperm differentiation and proliferation. The protein is Testis-specific Y-encoded protein 8 (TSPY8) of Homo sapiens (Human).